The sequence spans 395 residues: S-adenosylmethionine synthase (395 aa).

H14 contributes to the ATP binding site. D16 is a binding site for Mg(2+). E42 contributes to the K(+) binding site. Residues E55 and Q98 each contribute to the L-methionine site. The flexible loop stretch occupies residues 98 to 108 (QSPDIALGVDK). ATP is bound by residues 174-176 (DGK), 240-241 (RF), D249, 255-256 (RK), A272, and K276. L-methionine is bound at residue D249. Residue K280 participates in L-methionine binding.

Belongs to the AdoMet synthase family. As to quaternary structure, homotetramer; dimer of dimers. It depends on Mg(2+) as a cofactor. K(+) is required as a cofactor.

The protein localises to the cytoplasm. The enzyme catalyses L-methionine + ATP + H2O = S-adenosyl-L-methionine + phosphate + diphosphate. It functions in the pathway amino-acid biosynthesis; S-adenosyl-L-methionine biosynthesis; S-adenosyl-L-methionine from L-methionine: step 1/1. Its function is as follows. Catalyzes the formation of S-adenosylmethionine (AdoMet) from methionine and ATP. The overall synthetic reaction is composed of two sequential steps, AdoMet formation and the subsequent tripolyphosphate hydrolysis which occurs prior to release of AdoMet from the enzyme. This Thermotoga maritima (strain ATCC 43589 / DSM 3109 / JCM 10099 / NBRC 100826 / MSB8) protein is S-adenosylmethionine synthase.